Here is a 426-residue protein sequence, read N- to C-terminus: Phosphomethylpyrimidine synthase (426 aa).

Residues Asn66, Met95, Tyr124, His163, 185 to 187 (SRG), 226 to 229 (DGLR), and Glu265 contribute to the substrate site. His269 serves as a coordination point for Zn(2+). Tyr292 contributes to the substrate binding site. His333 is a binding site for Zn(2+). [4Fe-4S] cluster-binding residues include Cys407, Cys410, and Cys414.

It belongs to the ThiC family. The cofactor is [4Fe-4S] cluster.

The catalysed reaction is 5-amino-1-(5-phospho-beta-D-ribosyl)imidazole + S-adenosyl-L-methionine = 4-amino-2-methyl-5-(phosphooxymethyl)pyrimidine + CO + 5'-deoxyadenosine + formate + L-methionine + 3 H(+). It functions in the pathway cofactor biosynthesis; thiamine diphosphate biosynthesis. Its function is as follows. Catalyzes the synthesis of the hydroxymethylpyrimidine phosphate (HMP-P) moiety of thiamine from aminoimidazole ribotide (AIR) in a radical S-adenosyl-L-methionine (SAM)-dependent reaction. The protein is Phosphomethylpyrimidine synthase of Thermococcus gammatolerans (strain DSM 15229 / JCM 11827 / EJ3).